The primary structure comprises 380 residues: Cytochrome b (380 aa).

The next 4 helical transmembrane spans lie at 34–54 (FGSLLGLCLIAQIATGLFLAM), 78–99 (WLLRNLHANGASFFFICIYFHI), 114–134 (WNIGVILLFLLMATAFVGYVL), and 179–199 (FFTFHFILPFIITAVSLIHLL). Positions 84 and 98 each coordinate heme b. Residues His183 and His197 each coordinate heme b. Residue His202 coordinates a ubiquinone. Helical transmembrane passes span 227–247 (YKDLLGFVIMLGALASLSTFA), 289–309 (LGGVLAVVLSIMVLFLMPIIH), 321–341 (IAKTFFWALIANTAILTWIGG), and 348–368 (FITIGQIASGLYFLIFVLLIP).

The protein belongs to the cytochrome b family. The cytochrome bc1 complex contains 3 respiratory subunits (MT-CYB, CYC1 and UQCRFS1), 2 core proteins (UQCRC1 and UQCRC2) and probably 6 low-molecular weight proteins. The cofactor is heme b.

Its subcellular location is the mitochondrion inner membrane. Functionally, component of the ubiquinol-cytochrome c reductase complex (complex III or cytochrome b-c1 complex) that is part of the mitochondrial respiratory chain. The b-c1 complex mediates electron transfer from ubiquinol to cytochrome c. Contributes to the generation of a proton gradient across the mitochondrial membrane that is then used for ATP synthesis. In Rana amurensis (Siberian wood frog), this protein is Cytochrome b (mt-cyb).